The primary structure comprises 533 residues: MDAAAIISLLNSTSDRVDQFHVEVYRLSLYGAGIRGMEEETSLFNLFNSLNTSTGDLQLSVSFTVHVLKKFGFTGLAELTRYASPDFNMASSYPKADLLLTVTSFLYDLHPVRERSNALTFISSVYLNGYNYRSVTMPQFVKVMFDKGVIMIGDVSALDSLIKQYRPSFFNEYMERSKLTNTNSTFVSDDATQDNTAPAPTIPDDRATGTVAAEKGQPSAQVNQPPTTGGGNCTVSGSTQTSTNSFNSTNTVTAAGKEEKVSDDVTKGIKFLLMTATDPELKGVLERLKPLDGRDEVIEQFKNGVDLYIGKYGKHPVVVGQSAHTKGQQGSLPAEKVTNKIMEIFKPKYIIAIGVCFGMDGKEVNLGDVIVSDRIADLYNIRVEPGCIKARITDADKAGDTLVSLFRNPRNDIVSVIGKSRRFNMVKPSFDKENAKEVKVHCGPMVSTPALVDDAEFKEKLSKARPDALAGEMEGAGIFLAAKDHKVEAIVIKAVGDLADGKKIEYKDWKPFACQAAAEYVLHHLDDDRTIHM.

The death domain stretch occupies residues 1 to 262 (MDAAAIISLL…TAAGKEEKVS (262 aa)). Residues 184–248 (STFVSDDATQ…TQTSTNSFNS (65 aa)) form a disordered region. A compositionally biased stretch (polar residues) spans 218–227 (PSAQVNQPPT). Residues 236–248 (SGSTQTSTNSFNS) are compositionally biased toward low complexity. The segment at 263–533 (DDVTKGIKFL…HLDDDRTIHM (271 aa)) is purine nucleoside phosphorylase domain.

It carries out the reaction ATP + H2O = D-ribose 5-triphosphate + adenine. It catalyses the reaction dATP + H2O = 2-deoxyribose 5-triphosphate + adenine. Functionally, the C-terminal purine nucleoside phosphorylase (PNP) domain cleaves the N-glycosidic bond of ATP, and to a lesser extent dATP, to release adenine and a sugar triphosphate; has weak activity on ADP and AMP and no activity on dADP, dAMP, adenosine, deoxyadenosine or other (d)NTPs. This is Death domain-containing ATP nucleosidase (109585858) from Amphimedon queenslandica (Sponge).